The sequence spans 381 residues: Short-chain dehydrogenase anuD (381 aa).

6 residues coordinate NADP(+): I84, K109, D133, N158, Y244, and K248. Residue Y244 is the Proton acceptor of the active site. The active-site Proton donor is the Y244. The Lowers pKa of active site Tyr role is filled by K248.

This sequence belongs to the short-chain dehydrogenases/reductases (SDR) family.

In terms of biological role, highly reducing polyketide synthase; part of the gene cluster that mediates the biosynthesis of annullatin D, an alkylated aromatic polyketide with a fused dihydrobenzofuran lactone ring system that exhibits potent agonistic activities toward the cannabinoid receptors. AnuD does not seem to play a role within the pathway. The annullatin backbone 2-hydroxymethyl-3-pentylphenol is assembled from one acetyl-CoA starter unit and 5 malonyl-CoA elongation units by cooperation of the highly reducing polyketide synthase anuA, the short-chain dehydrogenase anuB and the oxidoreductase anuC, before being hydroxylated at the C-5 alkyl chain by the cytochrome P450 monooxygenase anuE to form (8S)-annullatin E. The prenyltransferase anuH subsequently installs one isoprenyl group at the benzene ring to form (8S)-annullatin J. Enzymatic or nonenzymatic dihydro-benzofuran ring formation between the prenyl and the phenolic hydroxyl groups in (8S)-annullatin J results in two diastereomers (2S,9S)-annullatin H and compound 12. The intermediate (2S,9S)-annullatin H is then converted to (2S,9S)-annullatin D by the FAD-linked oxidoreductase anuG-catalyzed five-member lactone ring formation. The isomer 12 acts as a substrate for the short-chain dehydrogenase anuF and is oxidized to (2R)-annullatin F, which is subsequently acetylated by an acetyltransferase leading to (2R)-annullatin G formation. The remaining enzymes identified within the cluster, anuD, anuI and anuJ, seem not to be involved in annullatin biosynthesis. This chain is Short-chain dehydrogenase anuD, found in Penicillium roqueforti (strain FM164).